A 394-amino-acid polypeptide reads, in one-letter code: Phosphoglycerate kinase (394 aa).

Residues 21 to 23 (DFN), arginine 36, 59 to 62 (HLGR), arginine 118, and arginine 151 contribute to the substrate site. The residue at position 183 (serine 183) is a Phosphoserine. The ATP site is built by lysine 201 and glycine 292. Threonine 299 is subject to Phosphothreonine. ATP contacts are provided by residues glutamate 323 and 350-353 (GGDS).

This sequence belongs to the phosphoglycerate kinase family. Monomer.

Its subcellular location is the cytoplasm. The catalysed reaction is (2R)-3-phosphoglycerate + ATP = (2R)-3-phospho-glyceroyl phosphate + ADP. The protein operates within carbohydrate degradation; glycolysis; pyruvate from D-glyceraldehyde 3-phosphate: step 2/5. In Bacillus cereus (strain B4264), this protein is Phosphoglycerate kinase.